Reading from the N-terminus, the 630-residue chain is MDPNFSESLNGFEYFDGNPNLLTDPMEDQYPPPSDTLLKYVSEILMEESNGDYKQSMFYDSLALRKTEEMLQQVITDSQNQSFSPADSLITNSWDASGSIDESAYSADPQPVNEIMVKSMFSDAESALQFKKGVEEASKFLPNSDQWVINLDIERSERRDSVKEEMGLDQLRVKKNHERDFEEVRSSKQFASNVEDSKVTDMFDKVLLLDGECDPQTLLDSEIQAIRSSKNIGEKGKKKKKKKSQVVDFRTLLTHCAQAISTGDKTTALEFLLQIRQQSSPLGDAGQRLAHCFANALEARLQGSTGPMIQTYYNALTSSLKDTAADTIRAYRVYLSSSPFVTLMYFFSIWMILDVAKDAPVLHIVDFGILYGFQWPMFIQSISDRKDVPRKLRITGIELPQCGFRPAERIEETGRRLAEYCKRFNVPFEYKAIASQNWETIRIEDLDIRPNEVLAVNAGLRLKNLQDETGSEENCPRDAVLKLIRNMNPDVFIHAIVNGSFNAPFFISRFKEAVYHYSALFDMFDSTLPRDNKERIRFEREFYGREAMNVIACEEADRVERPETYRQWQVRMVRAGFKQKTIKPELVELFRGKLKKWRYHKDFVVDENSKWLLQGWKGRTLYASSCWVPA.

Residues 240-628 form the GRAS domain; sequence KKKKSQVVDF…RTLYASSCWV (389 aa). The interval 247-312 is leucine repeat I (LRI); sequence VDFRTLLTHC…GSTGPMIQTY (66 aa). Residues 331-396 form a VHIID region; the sequence is YRVYLSSSPF…DVPRKLRITG (66 aa). Positions 362–366 match the VHIID motif; it reads LHIVD. Positions 412–444 are leucine repeat II (LRII); it reads ETGRRLAEYCKRFNVPFEYKAIASQNWETIRIE. The segment at 454-549 is PFYRE; sequence LAVNAGLRLK…REFYGREAMN (96 aa). An SAW region spans residues 552–628; sequence ACEEADRVER…RTLYASSCWV (77 aa).

This sequence belongs to the GRAS family.

It is found in the nucleus. In terms of biological role, probable transcription factor involved in plant development. In Arabidopsis thaliana (Mouse-ear cress), this protein is Scarecrow-like protein 34 (SCL34).